The sequence spans 233 residues: Charged multivesicular body protein 4c (233 aa).

Disordered stretches follow at residues 1–24 (MSKL…SPQE) and 173–233 (QEEL…AWAT). An intramolecular interaction with C-terminus region spans residues 1 to 153 (MSKLGKFFKG…EISEAFSQRV (153 aa)). Positions 125 to 183 (LNKIDDLMQEITEQQDIAQEISEAFSQRVGFGDDFDEDELMAELEELEQEELNKKMTNI) form a coiled coil. Positions 154 to 233 (GFGDDFDEDE…DIKQLAAWAT (80 aa)) are intramolecular interaction with N-terminus. Positions 204-216 (SSTARRSRAASSQ) are enriched in low complexity. Serine 210 carries the post-translational modification Phosphoserine; by AURKB.

This sequence belongs to the SNF7 family. Probable core component of the endosomal sorting required for transport complex III (ESCRT-III). ESCRT-III components are thought to multimerize to form a flat lattice on the perimeter membrane of the endosome. Several assembly forms of ESCRT-III may exist that interact and act sequentially. Self-associates. Interacts with CHMP2A. Interacts with CHMP4A. Interacts with CHMP4B. Interacts with CHMP6. Interacts with VPS4A. Interacts with PDCD6IP; the interaction is direct. Phosphorylated at Ser-210 by AURKB during cytokinesis: together with ZFYVE19/ANCHR, phosphorylated CHMP4C retains abscission-competent VPS4 (VPS4A and/or VPS4B) at the midbody ring until abscission checkpoint signaling is terminated at late cytokinesis. Expressed in heart, spleen and kidney.

The protein localises to the cytoplasm. It localises to the cytosol. Its subcellular location is the late endosome membrane. It is found in the midbody. The protein resides in the midbody ring. Probable core component of the endosomal sorting required for transport complex III (ESCRT-III) which is involved in multivesicular bodies (MVBs) formation and sorting of endosomal cargo proteins into MVBs. MVBs contain intraluminal vesicles (ILVs) that are generated by invagination and scission from the limiting membrane of the endosome and mostly are delivered to lysosomes enabling degradation of membrane proteins, such as stimulated growth factor receptors, lysosomal enzymes and lipids. The MVB pathway appears to require the sequential function of ESCRT-O, -I,-II and -III complexes. ESCRT-III proteins mostly dissociate from the invaginating membrane before the ILV is released. The ESCRT machinery also functions in topologically equivalent membrane fission events, such as the terminal stages of cytokinesis and the budding of enveloped viruses (HIV-1 and other lentiviruses). Key component of the cytokinesis checkpoint, a process required to delay abscission to prevent both premature resolution of intercellular chromosome bridges and accumulation of DNA damage: upon phosphorylation by AURKB, together with ZFYVE19/ANCHR, retains abscission-competent VPS4 (VPS4A and/or VPS4B) at the midbody ring until abscission checkpoint signaling is terminated at late cytokinesis. Deactivation of AURKB results in dephosphorylation of CHMP4C followed by its dissociation from ANCHR and VPS4 and subsequent abscission. ESCRT-III proteins are believed to mediate the necessary vesicle extrusion and/or membrane fission activities, possibly in conjunction with the AAA ATPase VPS4. Involved in HIV-1 p6- and p9-dependent virus release. CHMP4A/B/C are required for the exosomal release of SDCBP, CD63 and syndecan. This chain is Charged multivesicular body protein 4c (CHMP4C), found in Homo sapiens (Human).